Consider the following 426-residue polypeptide: Citrate synthase (426 aa).

Catalysis depends on residues histidine 314 and aspartate 372.

This sequence belongs to the citrate synthase family.

The catalysed reaction is oxaloacetate + acetyl-CoA + H2O = citrate + CoA + H(+). The protein operates within carbohydrate metabolism; tricarboxylic acid cycle; isocitrate from oxaloacetate: step 1/2. The sequence is that of Citrate synthase (gltA) from Helicobacter pylori (strain J99 / ATCC 700824) (Campylobacter pylori J99).